The following is a 102-amino-acid chain: Large ribosomal subunit protein bL21 (102 aa).

Belongs to the bacterial ribosomal protein bL21 family. In terms of assembly, part of the 50S ribosomal subunit. Contacts protein L20.

Its function is as follows. This protein binds to 23S rRNA in the presence of protein L20. The protein is Large ribosomal subunit protein bL21 of Marinomonas sp. (strain MWYL1).